Here is a 233-residue protein sequence, read N- to C-terminus: Protein lin-7 homolog A (233 aa).

The 56-residue stretch at 25-80 folds into the L27 domain; that stretch reads LDRDVARAIELLEKLQESGEVPVHKLQSLKKVLQSEFCTAIREVYQYMHETITVNG. The PDZ domain maps to 108-190; it reads VVELPKTDEG…SVKLVVRYTP (83 aa).

It belongs to the lin-7 family. Forms a complex with CASK and CASKIN1. Component of the brain-specific heterotrimeric complex (LIN-10-LIN-2-LIN-7 complex) composed of at least APBA1, CASK, and LIN7, which associates with the motor protein KIF17 to transport vesicles along microtubules. Can also interact with other modular proteins containing protein-protein interaction domains like PALS1, PALS2, MPP7, DLG1, DLG2 and DLG3 through its L27 domain. Interacts with DLG4, GRIN2B and MARCHF11 as well as CDH1 and CTNNB1, the channels KCNJ12/Kir2.2, KCNJ4/Kir2.3 and probably KCNJ2/Kir2.1 and SLC6A12/BGT-1 via its PDZ domain. The association of LIN7A with cadherin and beta-catenin is calcium-dependent, occurs at synaptic junctions and requires the actin cytoskeleton. Interacts with EGFR, ERBB2, ERBB3 and ERBB4 with both PDZ and KID domains. Associates with KIF17 via APBA1. Interacts with HTR4. Forms a tripartite complex composed of DLG1, MPP7 and LIN7 (LIN7A or LIN7C).

The protein localises to the cell membrane. It localises to the basolateral cell membrane. The protein resides in the cell junction. Its subcellular location is the postsynaptic density membrane. It is found in the tight junction. Plays a role in establishing and maintaining the asymmetric distribution of channels and receptors at the plasma membrane of polarized cells. Forms membrane-associated multiprotein complexes that may regulate delivery and recycling of proteins to the correct membrane domains. The tripartite complex composed of LIN7 (LIN7A, LIN7B or LIN7C), CASK and APBA1 associates with the motor protein KIF17 to transport vesicles containing N-methyl-D-aspartate (NMDA) receptor subunit NR2B along microtubules. This complex may have the potential to couple synaptic vesicle exocytosis to cell adhesion in brain. Ensures the proper localization of GRIN2B (subunit 2B of the NMDA receptor) to neuronal postsynaptic density and may function in localizing synaptic vesicles at synapses where it is recruited by beta-catenin and cadherin. Required to localize Kir2 channels, GABA transporter (SLC6A12) and EGFR/ERBB1, ERBB2, ERBB3 and ERBB4 to the basolateral membrane of epithelial cells. The chain is Protein lin-7 homolog A (LIN7A) from Bos taurus (Bovine).